The primary structure comprises 1819 residues: Protein REDUCED CHLOROPLAST COVERAGE 2 (1819 aa).

Residues 1 to 17 (MAPKAGKTKPHKSKGEK) show a composition bias toward basic residues. Disordered stretches follow at residues 1–23 (MAPK…KEEK), 128–180 (KPPV…GACE), 595–619 (QASS…GLGK), and 634–664 (KANK…LEKQ). 2 stretches are compositionally biased toward basic and acidic residues: residues 135 to 145 (LPKDSEKKESG) and 600 to 612 (SESK…KPEP). The region spanning 329 to 603 (EDETWGGDGG…NQASSKSESK (275 aa)) is the Clu domain. Residues 649 to 680 (TDNTSETEDQKELEKQNEEIEKMWKELVTETA) adopt a coiled-coil conformation. TPR repeat units lie at residues 892–925 (GRTL…LVAV), 934–967 (AGAY…NERE), 976–1009 (MKSY…LHLT), 1018–1051 (AATY…NQRL), and 1060–1093 (AASY…LQAK). Disordered stretches follow at residues 1152–1360 (SGIK…PMLS), 1413–1456 (KVNA…SPKE), 1468–1513 (KAFP…SESV), 1527–1573 (LKTV…ASAP), 1616–1670 (STPH…PRIM), and 1731–1809 (LVSE…DYSD). 2 stretches are compositionally biased toward basic and acidic residues: residues 1199–1224 (SSDK…EQSK) and 1230–1239 (KLVKPEATVH). Ser1244 bears the Phosphoserine mark. The span at 1269 to 1313 (KLNTNFMNVTQQPSRSRGKSTNFTSPRTSSNELSISVAGSTSSPA) shows a compositional bias: polar residues. At Ser1320 the chain carries Phosphoserine. A compositionally biased stretch (polar residues) spans 1343–1354 (LASSACTEQINK). Polar residues-rich tracts occupy residues 1496–1511 (CLLN…NGSE) and 1536–1546 (NLPNGDSSPKS). The span at 1551-1566 (DGEKQDACEAQKEMSK) shows a compositional bias: basic and acidic residues. Polar residues predominate over residues 1650-1665 (SFPNSTESNGEANQFN). The span at 1742–1759 (SEEKSGSEEESNNDKNAG) shows a compositional bias: basic and acidic residues. Positions 1767-1778 (QETTDTPENGHS) are enriched in polar residues. The segment covering 1785–1800 (TTSHETCDEKNGERQG) has biased composition (basic and acidic residues).

Expressed in the non-epidermal tissues of the true leaves. Not detected in the vegetative shoot meristem and leaf primordia.

Its subcellular location is the nucleus. It localises to the cytoplasm. It is found in the cytosol. Functionally, negatively regulates meristematic tissue proliferation by integrating developmental signals with carbon source availability. May act as the scaffold of a protein complex, which sequesters key factors that are required for the G2 to M transition in meristematic tissues. Together with REC2, REC3 and FMT/CLU, contributes to the establishment of the cellular volume devoted to the chloroplast compartment. This chain is Protein REDUCED CHLOROPLAST COVERAGE 2, found in Arabidopsis thaliana (Mouse-ear cress).